The following is a 570-amino-acid chain: Sulfite reductase [NADPH] hemoprotein beta-component (570 aa).

[4Fe-4S] cluster is bound by residues Cys-434, Cys-440, Cys-479, and Cys-483. Cys-483 serves as a coordination point for siroheme.

This sequence belongs to the nitrite and sulfite reductase 4Fe-4S domain family. In terms of assembly, alpha(8)-beta(8). The alpha component is a flavoprotein, the beta component is a hemoprotein. Siroheme is required as a cofactor. It depends on [4Fe-4S] cluster as a cofactor.

The enzyme catalyses hydrogen sulfide + 3 NADP(+) + 3 H2O = sulfite + 3 NADPH + 4 H(+). Its pathway is sulfur metabolism; hydrogen sulfide biosynthesis; hydrogen sulfide from sulfite (NADPH route): step 1/1. Functionally, component of the sulfite reductase complex that catalyzes the 6-electron reduction of sulfite to sulfide. This is one of several activities required for the biosynthesis of L-cysteine from sulfate. In Escherichia coli (strain B / BL21-DE3), this protein is Sulfite reductase [NADPH] hemoprotein beta-component.